Consider the following 884-residue polypeptide: Alanine--tRNA ligase (884 aa).

Zn(2+)-binding residues include histidine 572, histidine 576, cysteine 673, and histidine 677.

It belongs to the class-II aminoacyl-tRNA synthetase family. Zn(2+) is required as a cofactor.

It is found in the cytoplasm. It carries out the reaction tRNA(Ala) + L-alanine + ATP = L-alanyl-tRNA(Ala) + AMP + diphosphate. Catalyzes the attachment of alanine to tRNA(Ala) in a two-step reaction: alanine is first activated by ATP to form Ala-AMP and then transferred to the acceptor end of tRNA(Ala). Also edits incorrectly charged Ser-tRNA(Ala) and Gly-tRNA(Ala) via its editing domain. This is Alanine--tRNA ligase from Xylella fastidiosa (strain M23).